The primary structure comprises 455 residues: tRNA-2-methylthio-N(6)-dimethylallyladenosine synthase (455 aa).

The MTTase N-terminal domain occupies 3-117 (KGLYIESYGC…LPELIMKATR (115 aa)). Cys12, Cys48, Cys80, Cys155, Cys159, and Cys162 together coordinate [4Fe-4S] cluster. In terms of domain architecture, Radical SAM core spans 141 to 375 (VSRGVSAFVS…LLTQQRLFTK (235 aa)).

This sequence belongs to the methylthiotransferase family. MiaB subfamily. In terms of assembly, monomer. [4Fe-4S] cluster is required as a cofactor.

It localises to the cytoplasm. It carries out the reaction N(6)-dimethylallyladenosine(37) in tRNA + (sulfur carrier)-SH + AH2 + 2 S-adenosyl-L-methionine = 2-methylsulfanyl-N(6)-dimethylallyladenosine(37) in tRNA + (sulfur carrier)-H + 5'-deoxyadenosine + L-methionine + A + S-adenosyl-L-homocysteine + 2 H(+). In terms of biological role, catalyzes the methylthiolation of N6-(dimethylallyl)adenosine (i(6)A), leading to the formation of 2-methylthio-N6-(dimethylallyl)adenosine (ms(2)i(6)A) at position 37 in tRNAs that read codons beginning with uridine. The chain is tRNA-2-methylthio-N(6)-dimethylallyladenosine synthase from Anaplasma marginale (strain St. Maries).